Reading from the N-terminus, the 929-residue chain is Formin-like protein 11 (929 aa).

An N-terminal signal peptide occupies residues 1 to 28 (MMRHCRREWLLALCLISVQLLIPTGCEG). Residues 153–215 (ESSTTKSIPE…KSVAEKKKDS (63 aa)) are disordered. Polar residues predominate over residues 171–189 (KTSTPKPVNKPTDSVSSPP). A compositionally biased stretch (basic and acidic residues) spans 191-215 (RSYKSAPTEKENPPTKSVAEKKKDS). Residues 222-242 (FIGLSIAGIALMAHLCLCCFM) traverse the membrane as a helical segment. Disordered stretches follow at residues 372–472 (PVGS…ENSN) and 726–749 (AAKE…SEQT). Positions 382–447 (MQPPVMPPPI…GPPRPPPPAM (66 aa)) are enriched in pro residues. The 431-residue stretch at 468-898 (VENSNEAKTK…KAKAKQPSQS (431 aa)) folds into the FH2 domain. A compositionally biased stretch (basic and acidic residues) spans 738 to 749 (KTDDLGDKSEQT).

Belongs to the formin-like family. Class-I subfamily.

It localises to the membrane. This chain is Formin-like protein 11 (FH11), found in Oryza sativa subsp. japonica (Rice).